The primary structure comprises 361 residues: Phosphoserine aminotransferase (361 aa).

Residue Arg43 coordinates L-glutamate. Pyridoxal 5'-phosphate-binding positions include 77-78 (AS), Trp103, Thr153, Asp173, and Gln196. At Lys197 the chain carries N6-(pyridoxal phosphate)lysine. Pyridoxal 5'-phosphate is bound at residue 238–239 (NT).

It belongs to the class-V pyridoxal-phosphate-dependent aminotransferase family. SerC subfamily. As to quaternary structure, homodimer. Pyridoxal 5'-phosphate serves as cofactor.

It localises to the cytoplasm. It catalyses the reaction O-phospho-L-serine + 2-oxoglutarate = 3-phosphooxypyruvate + L-glutamate. The enzyme catalyses 4-(phosphooxy)-L-threonine + 2-oxoglutarate = (R)-3-hydroxy-2-oxo-4-phosphooxybutanoate + L-glutamate. It participates in amino-acid biosynthesis; L-serine biosynthesis; L-serine from 3-phospho-D-glycerate: step 2/3. Its pathway is cofactor biosynthesis; pyridoxine 5'-phosphate biosynthesis; pyridoxine 5'-phosphate from D-erythrose 4-phosphate: step 3/5. Functionally, catalyzes the reversible conversion of 3-phosphohydroxypyruvate to phosphoserine and of 3-hydroxy-2-oxo-4-phosphonooxybutanoate to phosphohydroxythreonine. This Pseudomonas paraeruginosa (strain DSM 24068 / PA7) (Pseudomonas aeruginosa (strain PA7)) protein is Phosphoserine aminotransferase.